The primary structure comprises 257 residues: Snake venom serine protease KN10 (257 aa).

The signal sequence occupies residues 1-18 (MVLIRVLANLLILQLSYA). The propeptide occupies 19-24 (QKSSEL). One can recognise a Peptidase S1 domain in the interval 25-248 (VVGGDECNIN…HLDWIKSIIA (224 aa)). 5 disulfides stabilise this stretch: Cys-31–Cys-162, Cys-49–Cys-65, Cys-141–Cys-209, Cys-173–Cys-188, and Cys-199–Cys-224. The Charge relay system role is filled by His-64. N-linked (GlcNAc...) asparagine glycosylation is present at Asn-102. The active-site Charge relay system is the Asp-109. Asn-120 and Asn-121 each carry an N-linked (GlcNAc...) asparagine glycan. The active-site Charge relay system is Ser-203.

The protein belongs to the peptidase S1 family. Snake venom subfamily. Monomer. Expressed by the venom gland.

The protein localises to the secreted. Snake venom serine protease that may act in the hemostasis system of the prey. The chain is Snake venom serine protease KN10 from Trimeresurus stejnegeri (Chinese green tree viper).